The following is a 366-amino-acid chain: Anhydro-N-acetylmuramic acid kinase (366 aa).

An ATP-binding site is contributed by 10 to 17 (GTSMDGID).

Belongs to the anhydro-N-acetylmuramic acid kinase family.

The catalysed reaction is 1,6-anhydro-N-acetyl-beta-muramate + ATP + H2O = N-acetyl-D-muramate 6-phosphate + ADP + H(+). It participates in amino-sugar metabolism; 1,6-anhydro-N-acetylmuramate degradation. The protein operates within cell wall biogenesis; peptidoglycan recycling. Functionally, catalyzes the specific phosphorylation of 1,6-anhydro-N-acetylmuramic acid (anhMurNAc) with the simultaneous cleavage of the 1,6-anhydro ring, generating MurNAc-6-P. Is required for the utilization of anhMurNAc either imported from the medium or derived from its own cell wall murein, and thus plays a role in cell wall recycling. The chain is Anhydro-N-acetylmuramic acid kinase from Legionella pneumophila subsp. pneumophila (strain Philadelphia 1 / ATCC 33152 / DSM 7513).